The primary structure comprises 65 residues: Large ribosomal subunit protein uL29 (65 aa).

It belongs to the universal ribosomal protein uL29 family.

This is Large ribosomal subunit protein uL29 from Mycoplasmopsis pulmonis (strain UAB CTIP) (Mycoplasma pulmonis).